We begin with the raw amino-acid sequence, 389 residues long: Capsule polysaccharide export protein KpsS (389 aa).

The chain is Capsule polysaccharide export protein KpsS (kpsS) from Escherichia coli.